Here is a 230-residue protein sequence, read N- to C-terminus: 5'-methylthioadenosine/S-adenosylhomocysteine nucleosidase (230 aa).

Glu12 serves as the catalytic Proton acceptor. Residues Gly78, Ile153, and 174–175 each bind substrate; that span reads ME. Catalysis depends on Asp198, which acts as the Proton donor.

Belongs to the PNP/UDP phosphorylase family. MtnN subfamily.

The catalysed reaction is S-adenosyl-L-homocysteine + H2O = S-(5-deoxy-D-ribos-5-yl)-L-homocysteine + adenine. The enzyme catalyses S-methyl-5'-thioadenosine + H2O = 5-(methylsulfanyl)-D-ribose + adenine. It carries out the reaction 5'-deoxyadenosine + H2O = 5-deoxy-D-ribose + adenine. It participates in amino-acid biosynthesis; L-methionine biosynthesis via salvage pathway; S-methyl-5-thio-alpha-D-ribose 1-phosphate from S-methyl-5'-thioadenosine (hydrolase route): step 1/2. Functionally, catalyzes the irreversible cleavage of the glycosidic bond in both 5'-methylthioadenosine (MTA) and S-adenosylhomocysteine (SAH/AdoHcy) to adenine and the corresponding thioribose, 5'-methylthioribose and S-ribosylhomocysteine, respectively. Also cleaves 5'-deoxyadenosine, a toxic by-product of radical S-adenosylmethionine (SAM) enzymes, into 5-deoxyribose and adenine. This is 5'-methylthioadenosine/S-adenosylhomocysteine nucleosidase from Shewanella halifaxensis (strain HAW-EB4).